Consider the following 1007-residue polypeptide: Probable beta-galactosidase A (1007 aa).

The N-terminal stretch at methionine 1–glycine 18 is a signal peptide. Tyrosine 96, asparagine 140, alanine 141, and glutamate 142 together coordinate substrate. Asparagine 156 is a glycosylation site (N-linked (GlcNAc...) asparagine). Asparagine 199 serves as a coordination point for substrate. The active-site Proton donor is glutamate 200. Cysteine 205 and cysteine 206 are joined by a disulfide. Tyrosine 260 is a binding site for substrate. Cysteine 266 and cysteine 315 are disulfide-bonded. Glutamate 298 acts as the Nucleophile in catalysis. Tyrosine 364 is a substrate binding site. Asparagine 373, asparagine 402, asparagine 422, asparagine 478, asparagine 522, asparagine 622, asparagine 739, asparagine 760, asparagine 777, and asparagine 805 each carry an N-linked (GlcNAc...) asparagine glycan. Residues arginine 862–leucine 881 are disordered. An N-linked (GlcNAc...) asparagine glycan is attached at asparagine 914.

It belongs to the glycosyl hydrolase 35 family.

The protein localises to the secreted. The enzyme catalyses Hydrolysis of terminal non-reducing beta-D-galactose residues in beta-D-galactosides.. Functionally, cleaves beta-linked terminal galactosyl residues from gangliosides, glycoproteins, and glycosaminoglycans. In Aspergillus phoenicis (Aspergillus saitoi), this protein is Probable beta-galactosidase A (lacA).